Reading from the N-terminus, the 383-residue chain is Seipin (383 aa).

Topologically, residues 1–27 (MVNDPPVPALLWAQEVGHVLAGRARRL) are cytoplasmic. The helical transmembrane segment at 28-48 (MLQFGVLFCTILLLLWVSVFL) threads the bilayer. Over 49-242 (YGSFYYSYMP…TCAFVGVASN (194 aa)) the chain is Lumenal. 2 N-linked (GlcNAc...) asparagine glycosylation sites follow: Asn88 and Asn242. A helical transmembrane segment spans residues 243-263 (FTFLSVIVLFSYMQWVWGAVW). Topologically, residues 264–383 (PRHRFSLQVN…LRQRPTCSSS (120 aa)) are cytoplasmic. Residues 279–383 (NSHHGAPRRI…LRQRPTCSSS (105 aa)) are disordered. Position 289 is a phosphoserine (Ser289). Residues 292–302 (QPGQESTQQSD) are compositionally biased toward polar residues. Positions 322–332 (EEEKPEKRPLN) are enriched in basic and acidic residues. 2 positions are modified to phosphoserine: Ser342 and Ser345. Over residues 353–371 (TEANPPTSASASALAPETL) the composition is skewed to low complexity.

It belongs to the seipin family. In terms of assembly, undecamer (an oligomer having eleven subunits). Oligomerization is important for its function in lipid droplet formation. Interacts with LDAF1 to form an oligomeric complex. Interacts with RAB18. Interacts with ZFYVE1 in a RAB18-dependent manner. Expressed in the paraventricular nucleus of the hypothalamus (PVN) and brainstem dorsal vagal complex (DVC) in oxytocin and catecholaminergic neurons (at protein level). Highest expression detected in subcutaneous and epididymal white adipose tissue, brown adipose tissue and testis. Also expressed in brain, skeletal muscle and adrenal gland, with lower levels detected in liver, heart, kidney, spleen, lung and small intestine. In brain, detected in piriform cortex, olfactory tubercle, islands of Calleja, lateral septal nucleus, medial septal nucleus, nucleus of the vertical limb of the diagonal band, nucleus of the horizontal limb of the diagonal band, preoptic area, paraventricular thalamic nucleus, lateral globus pallidus, supraoptic nucleus, suprachiasmatic nucleus, subfornical organ, paraventricular nucleus of the hypothalamus, zona incerta, dorsomedial nucleus of the hypothalamus, ventromedial nucleus of the hypothalamus, arcuate nucleus of the hypothalamus, basomedial amygdaloid nucleus, medial amygdaloid nucleus, medial habenular, pyramidal cell layer of the hippocampus, granular layer of the dentate gyrus, posterior hypothalamus, supramammilliary nucleus, premammillary nucleus, nucleus of Darkschewitsch, Edinger-Westphal nucleus, ventral tegmental area, dorsal raphe nucleus, periaqueductal gray, median raphe nucleus, lateral parabrachial nucleus, dorsal tegmental nucleus, laterodorsal tegmental nucleus, locus coeruleus, Barrington's nucleus, medial vestibular nucleus, ambiguous nucleus, dorsal vagal complex and hypoglossal nucleus.

The protein localises to the endoplasmic reticulum membrane. Its subcellular location is the lipid droplet. Plays a crucial role in the formation of lipid droplets (LDs) which are storage organelles at the center of lipid and energy homeostasis. In association with LDAF1, defines the sites of LD formation in the ER. Also required for growth and maturation of small nascent LDs into larger mature LDs. Mediates the formation and/or stabilization of endoplasmic reticulum-lipid droplets (ER-LD) contacts, facilitating protein and lipid delivery from the ER into growing LDs. Regulates the maturation of ZFYVE1-positive nascent LDs and the function of the RAB18-ZFYVE1 complex in mediating the formation of ER-LD contacts. Binds anionic phospholipids including phosphatidic acid. Plays an important role in the differentiation and development of adipocytes. This is Seipin from Mus musculus (Mouse).